A 103-amino-acid chain; its full sequence is Small ribosomal subunit protein uS10 (103 aa).

It belongs to the universal ribosomal protein uS10 family. Part of the 30S ribosomal subunit.

Its function is as follows. Involved in the binding of tRNA to the ribosomes. This Chlorobaculum parvum (strain DSM 263 / NCIMB 8327) (Chlorobium vibrioforme subsp. thiosulfatophilum) protein is Small ribosomal subunit protein uS10.